The chain runs to 227 residues: Monoamine regulon transcriptional regulator (227 aa).

The HTH luxR-type domain maps to 155–220 (EDDLPAILTA…ELVSRTWMPA (66 aa)). Positions 179 to 198 (NKLIARQLDISLSTVKTHLR) form a DNA-binding region, H-T-H motif.

In terms of biological role, positive regulatory protein for the induction of arylsulfatase synthesis (maoA), tyramine oxidase (tynA), maoC, maoE/F operon, and atsB/A operon which are all regulated by monoamines, and included under the common term of monoamine regulon. The polypeptide is Monoamine regulon transcriptional regulator (moaR) (Klebsiella aerogenes (Enterobacter aerogenes)).